The following is an 80-amino-acid chain: MLIAWPDRVHCCEIMLQEGARVVDAVEMAALNGIEQAVGYAVFGVLVTSDHVLNEGDRVELLRPLLIDPKEARRRRAVSA.

This sequence belongs to the UPF0125 (RnfH) family.

The chain is UPF0125 protein XF_2346 from Xylella fastidiosa (strain 9a5c).